The chain runs to 689 residues: Chloride channel protein ClC-Kb (689 aa).

The Cytoplasmic portion of the chain corresponds to 1–51 (MSRVLVIEQREGEEKTLIQKHIFRPFPNTRRVVIDHLQRLKNFLFRIGDDW). Transmembrane regions (helical) follow at residues 52–83 (YFLFALGVIMALISFTMDFTVSKMLNAHRWLQ) and 92–112 (LRYLSWIVYPIALVAFSTGFA). The segment at residues 117 to 128 (PHSGGSGIPELK) is an intramembrane region (helical). Ser-122 contributes to the chloride binding site. 2 helical membrane-spanning segments follow: residues 142–161 (IKNFGAKVVGLTCTLSAGST) and 162–181 (MFLGKVGPFVHLSSMIAAYL). Residue Asn-194 is glycosylated (N-linked (GlcNAc...) asparagine). The segment at residues 204–225 (AAAAVGVSTVFGAPISGVLFSV) is an intramembrane region (helical). The chain crosses the membrane as a helical span at residues 237 to 256 (YWRGFFAATCGAFVFRLLAV). Positions 260, 262, 279, and 282 each coordinate Ca(2+). Transmembrane regions (helical) follow at residues 283–311 (MFFFAILGVVCGLIGCAYLFCQRWLLGYV) and 326–343 (PMYSALVALLISSITFPE). An intramembrane region (helical) is located at residues 350–361 (ASRLTMKELLTS). 2 helical membrane-spanning segments follow: residues 402-422 (GTLAFFIIMKFWMFILATTLP) and 423-442 (MPAGYFMPVFVFGAAIGRLV). Phe-428 is a binding site for chloride. The helical intramembrane region spans 466–498 (GGYAWQGAPAYSGAVTHSVSTALLAFEATGQIA). The chain crosses the membrane as a helical span at residues 502–522 (PVILCVLIANAFTQKLQPSFY). Residues 523 to 689 (DGTIIVKKLP…KAIEDLANPK (167 aa)) are Cytoplasmic-facing. CBS domains follow at residues 553 to 613 (MNPD…SHER) and 630 to 689 (ACSI…ANPK).

This sequence belongs to the chloride channel (TC 2.A.49) family. In terms of processing, N-glycosylated on a single asparagine, probably Asn-365 or Asn-375. As to expression, expressed in two distinct regions of the kidney; the proximal convoluted tubule and the diluting segment.

It is found in the cell membrane. In terms of biological role, voltage-gated chloride channel. Chloride channels have several functions including the regulation of cell volume, the stabilization of membrane potential, signal transduction and transepithelial transport. The sequence is that of Chloride channel protein ClC-Kb (clcnkb) from Xenopus laevis (African clawed frog).